The primary structure comprises 180 residues: O-acetyl-ADP-ribose deacetylase (180 aa).

Residues 1–175 (MKPQIDVIHG…LYQRLLTQRG (175 aa)) enclose the Macro domain. Residues 11 to 12 (DI), Asn-25, 33 to 35 (GVD), and 122 to 126 (STGVY) each bind substrate. Residue Asp-35 is the Proton acceptor of the active site.

The protein belongs to the MacroD-type family. YmdB subfamily. As to quaternary structure, homodimer. Interacts with RNase III.

It carries out the reaction 3''-O-acetyl-ADP-D-ribose + H2O = ADP-D-ribose + acetate + H(+). It catalyses the reaction 2''-O-acetyl-ADP-D-ribose + H2O = ADP-D-ribose + acetate + H(+). Its function is as follows. Deacetylates O-acetyl-ADP ribose to yield ADP-ribose and free acetate. Down-regulates ribonuclease 3 (RNase III) activity. Acts by interacting directly with the region of the ribonuclease that is required for dimerization/activation. The sequence is that of O-acetyl-ADP-ribose deacetylase from Enterobacter cloacae subsp. cloacae (strain ATCC 13047 / DSM 30054 / NBRC 13535 / NCTC 10005 / WDCM 00083 / NCDC 279-56).